A 198-amino-acid chain; its full sequence is Putative NADH dehydrogenase/NAD(P)H nitroreductase XOO4267 (198 aa).

Belongs to the nitroreductase family. HadB/RutE subfamily. Requires FMN as cofactor.

In Xanthomonas oryzae pv. oryzae (strain KACC10331 / KXO85), this protein is Putative NADH dehydrogenase/NAD(P)H nitroreductase XOO4267.